The primary structure comprises 283 residues: MIAKVINGKNIAKKIISKINLKIKKYSKLGMRPASLAMINVGNNPASKIYISNKEKICKKIGLISYLYNFSKNISEIDLINLIIKLNKNNLIDGILVQLPLPKEINKLNVLEKIIPKKDVDGFHPYNIGRLCQRKPTIVPCTPKGIIRLLKYYKINLLGLNAVVVGASNIVGRPMSLELLLEGCTVTITHRFTINLKKYIENAELLIVAIGKAEFIPGSWIKPGAIVIDVGINRLKSGKIVGDVNYEDAIEKASYITPVPGGIGPMTIAMLIENTMQIYINNY.

Residues 166–168 (GAS) and isoleucine 232 each bind NADP(+).

Belongs to the tetrahydrofolate dehydrogenase/cyclohydrolase family. In terms of assembly, homodimer.

The enzyme catalyses (6R)-5,10-methylene-5,6,7,8-tetrahydrofolate + NADP(+) = (6R)-5,10-methenyltetrahydrofolate + NADPH. It carries out the reaction (6R)-5,10-methenyltetrahydrofolate + H2O = (6R)-10-formyltetrahydrofolate + H(+). Its pathway is one-carbon metabolism; tetrahydrofolate interconversion. Catalyzes the oxidation of 5,10-methylenetetrahydrofolate to 5,10-methenyltetrahydrofolate and then the hydrolysis of 5,10-methenyltetrahydrofolate to 10-formyltetrahydrofolate. The sequence is that of Bifunctional protein FolD from Wigglesworthia glossinidia brevipalpis.